A 375-amino-acid chain; its full sequence is Chaperone protein DnaJ (375 aa).

Residues 5 to 70 (DFYETLGVAK…QKRAAYDRYG (66 aa)) form the J domain. The CR-type zinc-finger motif lies at 136-214 (GKTAQIRVPT…CHGQGRVTEE (79 aa)). Residues C149, C152, C166, C169, C188, C191, C202, and C205 each contribute to the Zn(2+) site. CXXCXGXG motif repeat units follow at residues 149–156 (CDVCSGSG), 166–173 (CGTCQGTG), 188–195 (CPTCHGRG), and 202–209 (CPKCHGQG).

This sequence belongs to the DnaJ family. As to quaternary structure, homodimer. The cofactor is Zn(2+).

The protein resides in the cytoplasm. Functionally, participates actively in the response to hyperosmotic and heat shock by preventing the aggregation of stress-denatured proteins and by disaggregating proteins, also in an autonomous, DnaK-independent fashion. Unfolded proteins bind initially to DnaJ; upon interaction with the DnaJ-bound protein, DnaK hydrolyzes its bound ATP, resulting in the formation of a stable complex. GrpE releases ADP from DnaK; ATP binding to DnaK triggers the release of the substrate protein, thus completing the reaction cycle. Several rounds of ATP-dependent interactions between DnaJ, DnaK and GrpE are required for fully efficient folding. Also involved, together with DnaK and GrpE, in the DNA replication of plasmids through activation of initiation proteins. This chain is Chaperone protein DnaJ, found in Rhizobium etli (strain ATCC 51251 / DSM 11541 / JCM 21823 / NBRC 15573 / CFN 42).